Consider the following 416-residue polypeptide: Enterobactin exporter EntS (416 aa).

At 1 to 21 (MNKQSWLLNLSLLKTHPAFRA) the chain is on the cytoplasmic side. A helical transmembrane segment spans residues 22–42 (VFLARFISIVSLGLLGVAVPV). The Periplasmic portion of the chain corresponds to 43–55 (QIQMMTHSTWQVG). The chain crosses the membrane as a helical span at residues 56–76 (LSVTLTGGAMFVGLMVGGVLA). Residues 77 to 83 (DRYERKK) are Cytoplasmic-facing. A helical membrane pass occupies residues 84-104 (VILLARGTCGIGFIGLCLNAL). The Periplasmic segment spans residues 105 to 109 (LPEPS). The helical transmembrane segment at 110–130 (LLAIYLLGLWDGFFASLGVTA) threads the bilayer. The Cytoplasmic segment spans residues 131-156 (LLAATPALVGRENLMQAGAITMLTVR). The chain crosses the membrane as a helical span at residues 157 to 177 (LGSVNSPMIGGLLLAIGGVAW). Position 178 (Asn-178) is a topological domain, periplasmic. Residues 179 to 199 (YGLAAAGTFITLLPLLSLPAL) traverse the membrane as a helical segment. Residues 200 to 218 (PPPPQPREHPLKSLLAGFR) are Cytoplasmic-facing. Residues 219–239 (FLLASPLVGGIALLGGLLTMA) form a helical membrane-spanning segment. The Periplasmic portion of the chain corresponds to 240–256 (SAVRVLYPALADNWQMS). The chain crosses the membrane as a helical span at residues 257-277 (AAQIGFLYAAIPLGAAIGALT). Over 278 to 287 (SGKLAHSARP) the chain is Cytoplasmic. Residues 288–307 (GLLMLLSTLGSFLAIGLFGL) traverse the membrane as a helical segment. Topologically, residues 308–313 (MPMWIL) are periplasmic. The helical transmembrane segment at 314-336 (GVVCLALFGWLSAVSSLLQYTML) threads the bilayer. The Cytoplasmic segment spans residues 337–356 (QTQTPEVMLGRINGLWTAQN). The helical transmembrane segment at 357-377 (VTGDAIGAALLGGLGAMMTPV) threads the bilayer. Ala-378 is a topological domain (periplasmic). A helical membrane pass occupies residues 379 to 399 (SASASGFGLLIIGVLLLLVLV). At 400–416 (ELRHFRQTPPQVTASDS) the chain is on the cytoplasmic side.

This sequence belongs to the major facilitator superfamily. EntS (TC 2.A.1.38) family.

Its subcellular location is the cell inner membrane. Its function is as follows. Component of an export pathway for enterobactin. The polypeptide is Enterobactin exporter EntS (Shigella dysenteriae serotype 1 (strain Sd197)).